Consider the following 421-residue polypeptide: Enolase 1 (421 aa).

Glutamine 164 is a (2R)-2-phosphoglycerate binding site. Glutamate 206 (proton donor) is an active-site residue. Positions 243, 287, and 314 each coordinate Mg(2+). (2R)-2-phosphoglycerate contacts are provided by lysine 339, arginine 368, serine 369, and lysine 390. The active-site Proton acceptor is the lysine 339.

The protein belongs to the enolase family. Component of the RNA degradosome, a multiprotein complex involved in RNA processing and mRNA degradation. Mg(2+) is required as a cofactor.

The protein localises to the cytoplasm. Its subcellular location is the secreted. It localises to the cell surface. It carries out the reaction (2R)-2-phosphoglycerate = phosphoenolpyruvate + H2O. The protein operates within carbohydrate degradation; glycolysis; pyruvate from D-glyceraldehyde 3-phosphate: step 4/5. Catalyzes the reversible conversion of 2-phosphoglycerate (2-PG) into phosphoenolpyruvate (PEP). It is essential for the degradation of carbohydrates via glycolysis. In Methylococcus capsulatus (strain ATCC 33009 / NCIMB 11132 / Bath), this protein is Enolase 1.